The chain runs to 213 residues: MSNIAAPRLPVPGPDLRAPGQGGPAFDDQVFNRLLANRIVFLGSVVEDSIANAICAQLLLLNAEDPTRDIFLYINSPGGSVSAGMAIYDTMQFVENDVATVSLGLAASMGQFLLCAGASGKRYSLPHARIMMHQPSGGIGGTASDIAIQAEQMLYTKRMMQERIAFHTGQPIEQIERDSDRDRWFTAEEAKDYGFVDHVVQQARQVPSEGPVS.

Residue serine 108 is the Nucleophile of the active site. Histidine 133 is a catalytic residue.

It belongs to the peptidase S14 family. As to quaternary structure, fourteen ClpP subunits assemble into 2 heptameric rings which stack back to back to give a disk-like structure with a central cavity, resembling the structure of eukaryotic proteasomes.

The protein resides in the cytoplasm. The enzyme catalyses Hydrolysis of proteins to small peptides in the presence of ATP and magnesium. alpha-casein is the usual test substrate. In the absence of ATP, only oligopeptides shorter than five residues are hydrolyzed (such as succinyl-Leu-Tyr-|-NHMec, and Leu-Tyr-Leu-|-Tyr-Trp, in which cleavage of the -Tyr-|-Leu- and -Tyr-|-Trp bonds also occurs).. In terms of biological role, cleaves peptides in various proteins in a process that requires ATP hydrolysis. Has a chymotrypsin-like activity. Plays a major role in the degradation of misfolded proteins. This is ATP-dependent Clp protease proteolytic subunit 1 from Frankia casuarinae (strain DSM 45818 / CECT 9043 / HFP020203 / CcI3).